Consider the following 626-residue polypeptide: ATP-dependent RNA helicase cyt-19, mitochondrial (626 aa).

The Q motif motif lies at 74–103 (ADLAALGVHENVVRAITHGMGYENMTEVQS). The 192-residue stretch at 106–297 (ISPALKGKDI…RSYIDKNNFE (192 aa)) folds into the Helicase ATP-binding domain. 119–126 (AKTGTGKT) lines the ATP pocket. The DEAD box signature appears at 241 to 244 (DEAD). A Helicase C-terminal domain is found at 329 to 493 (AMLELIEKAL…CASVNAADSG (165 aa)). Residues 569 to 626 (LRVETREHSMRPMGSGPGHRRDFNSRGPRRQSDDPFENALHRAQDLDRRPTRRQQASF) are disordered. The interval 578–626 (MRPMGSGPGHRRDFNSRGPRRQSDDPFENALHRAQDLDRRPTRRQQASF) is RNA-binding. The segment covering 607 to 617 (ALHRAQDLDRR) has biased composition (basic and acidic residues).

Belongs to the DEAD box helicase family.

It localises to the mitochondrion matrix. It carries out the reaction ATP + H2O = ADP + phosphate + H(+). Activated by exposed helices in a group I intron RNA. Its function is as follows. Acts as an RNA chaperone to resolve non-native structures formed during RNA folding to promote mitochondrial group I, but also group II, intron splicing. Functions predominantly by disrupting accessible RNA secondary structure and depends on spontaneous openings in tightly packed RNAs to gain access to RNA helices. The polypeptide is ATP-dependent RNA helicase cyt-19, mitochondrial (Neurospora crassa (strain ATCC 24698 / 74-OR23-1A / CBS 708.71 / DSM 1257 / FGSC 987)).